The chain runs to 79 residues: uncharacterized protein (79 aa).

Residues lysine 15–alanine 37 traverse the membrane as a helical segment.

It is found in the membrane. This is an uncharacterized protein from Dictyostelium discoideum (Social amoeba).